The chain runs to 400 residues: Glycine betaine/proline betaine transport system ATP-binding protein ProV (400 aa).

Residues Leu29–Phe265 enclose the ABC transporter domain. Gly61–Ser68 contributes to the ATP binding site. CBS domains are found at residues Arg282–Ala341 and Leu343–Gly400.

The protein belongs to the ABC transporter superfamily. In terms of assembly, the complex is composed of two ATP-binding proteins (ProV), two transmembrane proteins (ProW) and a solute-binding protein (ProX).

The protein resides in the cell inner membrane. Its function is as follows. Part of the ProU ABC transporter complex involved in glycine betaine and proline betaine uptake. Probably responsible for energy coupling to the transport system. The protein is Glycine betaine/proline betaine transport system ATP-binding protein ProV of Escherichia coli (strain K12).